A 349-amino-acid polypeptide reads, in one-letter code: Anthranilate phosphoribosyltransferase (349 aa).

5-phospho-alpha-D-ribose 1-diphosphate is bound by residues Gly82, 85–86 (GD), 92–95 (NVST), 110–118 (KHGNRGVSS), and Ser122. Gly82 serves as a coordination point for anthranilate. A Mg(2+)-binding site is contributed by Ser94. An anthranilate-binding site is contributed by Asn113. Residue Arg168 participates in anthranilate binding. Residues Asp227 and Glu228 each contribute to the Mg(2+) site.

Belongs to the anthranilate phosphoribosyltransferase family. As to quaternary structure, homodimer. Mg(2+) serves as cofactor.

The catalysed reaction is N-(5-phospho-beta-D-ribosyl)anthranilate + diphosphate = 5-phospho-alpha-D-ribose 1-diphosphate + anthranilate. It participates in amino-acid biosynthesis; L-tryptophan biosynthesis; L-tryptophan from chorismate: step 2/5. Its function is as follows. Catalyzes the transfer of the phosphoribosyl group of 5-phosphorylribose-1-pyrophosphate (PRPP) to anthranilate to yield N-(5'-phosphoribosyl)-anthranilate (PRA). The polypeptide is Anthranilate phosphoribosyltransferase (Acinetobacter baumannii (strain ATCC 17978 / DSM 105126 / CIP 53.77 / LMG 1025 / NCDC KC755 / 5377)).